The sequence spans 264 residues: S-adenosylmethionine decarboxylase proenzyme (264 aa).

The active-site Schiff-base intermediate with substrate; via pyruvic acid is the S112. S112 is subject to Pyruvic acid (Ser); by autocatalysis. H117 functions as the Proton acceptor; for processing activity in the catalytic mechanism. The active-site Proton donor; for catalytic activity is the C140.

Belongs to the prokaryotic AdoMetDC family. Type 2 subfamily. In terms of assembly, heterooctamer of four alpha and four beta chains arranged as a tetramer of alpha/beta heterodimers. Pyruvate serves as cofactor. Is synthesized initially as an inactive proenzyme. Formation of the active enzyme involves a self-maturation process in which the active site pyruvoyl group is generated from an internal serine residue via an autocatalytic post-translational modification. Two non-identical subunits are generated from the proenzyme in this reaction, and the pyruvate is formed at the N-terminus of the alpha chain, which is derived from the carboxyl end of the proenzyme. The post-translation cleavage follows an unusual pathway, termed non-hydrolytic serinolysis, in which the side chain hydroxyl group of the serine supplies its oxygen atom to form the C-terminus of the beta chain, while the remainder of the serine residue undergoes an oxidative deamination to produce ammonia and the pyruvoyl group blocking the N-terminus of the alpha chain.

The enzyme catalyses S-adenosyl-L-methionine + H(+) = S-adenosyl 3-(methylsulfanyl)propylamine + CO2. Its pathway is amine and polyamine biosynthesis; S-adenosylmethioninamine biosynthesis; S-adenosylmethioninamine from S-adenosyl-L-methionine: step 1/1. Catalyzes the decarboxylation of S-adenosylmethionine to S-adenosylmethioninamine (dcAdoMet), the propylamine donor required for the synthesis of the polyamines spermine and spermidine from the diamine putrescine. In Klebsiella pneumoniae (strain 342), this protein is S-adenosylmethionine decarboxylase proenzyme.